Here is a 194-residue protein sequence, read N- to C-terminus: Erythropoietin (194 aa).

Residues 1-27 (MGARDCTPLLLLLLSFLLFPLGLPVLG) form the signal peptide. Cystine bridges form between C34-C189 and C56-C60. The N-linked (GlcNAc...) asparagine glycan is linked to N51. N65 and N110 each carry an N-linked (GlcNAc...) asparagine glycan.

Belongs to the EPO/TPO family. As to expression, produced by kidney or liver of adult mammals and by liver of fetal or neonatal mammals.

Its subcellular location is the secreted. In terms of biological role, hormone involved in the regulation of erythrocyte proliferation and differentiation and the maintenance of a physiological level of circulating erythrocyte mass. Binds to EPOR leading to EPOR dimerization and JAK2 activation thereby activating specific downstream effectors, including STAT1 and STAT3. This Ovis aries (Sheep) protein is Erythropoietin (EPO).